The following is an 87-amino-acid chain: Phosphoribosyl-ATP pyrophosphatase (87 aa).

It belongs to the PRA-PH family.

The protein localises to the cytoplasm. The catalysed reaction is 1-(5-phospho-beta-D-ribosyl)-ATP + H2O = 1-(5-phospho-beta-D-ribosyl)-5'-AMP + diphosphate + H(+). The protein operates within amino-acid biosynthesis; L-histidine biosynthesis; L-histidine from 5-phospho-alpha-D-ribose 1-diphosphate: step 2/9. The chain is Phosphoribosyl-ATP pyrophosphatase from Bifidobacterium adolescentis (strain ATCC 15703 / DSM 20083 / NCTC 11814 / E194a).